The chain runs to 298 residues: ATP synthase F(1) complex subunit gamma, mitochondrial (298 aa).

Residues 1–25 (MFSRAGVAGLSAWTVQPQWIQVRNM) constitute a mitochondrion transit peptide. N6-acetyllysine is present on lysine 39. N6-succinyllysine is present on lysine 49. An N6-acetyllysine modification is found at lysine 55. An N6-acetyllysine; alternate modification is found at lysine 115. Lysine 115 carries the N6-succinyllysine; alternate modification. Serine 146 is modified (phosphoserine). Position 154 is an N6-acetyllysine; alternate (lysine 154). The residue at position 154 (lysine 154) is an N6-succinyllysine; alternate. At lysine 197 the chain carries N6-acetyllysine. Lysine 270 is subject to N6-succinyllysine.

Belongs to the ATPase gamma chain family. In terms of assembly, component of the ATP synthase complex composed at least of ATP5F1A/subunit alpha, ATP5F1B/subunit beta, ATP5MC1/subunit c (homooctomer), MT-ATP6/subunit a, MT-ATP8/subunit 8, ATP5ME/subunit e, ATP5MF/subunit f, ATP5MG/subunit g, ATP5MK/subunit k, ATP5MJ/subunit j, ATP5F1C/subunit gamma, ATP5F1D/subunit delta, ATP5F1E/subunit epsilon, ATP5PF/subunit F6, ATP5PB/subunit b, ATP5PD/subunit d, ATP5PO/subunit OSCP. ATP synthase complex consists of a soluble F(1) head domain (subunits alpha(3) and beta(3)) - the catalytic core - and a membrane F(0) domain - the membrane proton channel (subunits c, a, 8, e, f, g, k and j). These two domains are linked by a central stalk (subunits gamma, delta, and epsilon) rotating inside the F1 region and a stationary peripheral stalk (subunits F6, b, d, and OSCP). Interacts with FLVCR2; this interaction occurs in the absence of heme and is disrupted upon heme binding.

It localises to the mitochondrion inner membrane. In terms of biological role, subunit gamma, of the mitochondrial membrane ATP synthase complex (F(1)F(0) ATP synthase or Complex V) that produces ATP from ADP in the presence of a proton gradient across the membrane which is generated by electron transport complexes of the respiratory chain. ATP synthase complex consist of a soluble F(1) head domain - the catalytic core - and a membrane F(1) domain - the membrane proton channel. These two domains are linked by a central stalk rotating inside the F(1) region and a stationary peripheral stalk. During catalysis, ATP synthesis in the catalytic domain of F(1) is coupled via a rotary mechanism of the central stalk subunits to proton translocation. In vivo, can only synthesize ATP although its ATP hydrolase activity can be activated artificially in vitro. With the central stalk subunit delta, is essential for the biogenesis of F(1) catalytic part of the ATP synthase complex namely in the formation of F1 assembly intermediate. This chain is ATP synthase F(1) complex subunit gamma, mitochondrial, found in Bos taurus (Bovine).